A 210-amino-acid chain; its full sequence is A-kinase-interacting protein 1 (210 aa).

Disordered regions lie at residues His-58–Pro-80 and Gln-136–Gln-162.

As to quaternary structure, interacts with PRKACA and RELA. Expressed at high levels in adult heart and at lower levels in brain, testis, ovary and skeletal muscle. Up-regulated in some breast cancer cell lines. Isoform 1 and isoform 3 are expressed in fetal brain.

The protein localises to the nucleus. In terms of biological role, enhances NF-kappa-B transcriptional activity by regulating the nuclear localization of the NF-kappa-B subunit RELA and promoting the phosphorylation of RELA by PRKACA. Regulates the effect of the cAMP-dependent protein kinase signaling pathway on the NF-kappa-B activation cascade. The polypeptide is A-kinase-interacting protein 1 (AKIP1) (Homo sapiens (Human)).